Reading from the N-terminus, the 86-residue chain is MKNASLKLPLLIFILVITSNLGAEARKLTGVADVIVEGEAASPQYGIIDENDTLNKSPSCKRDIDCTFQCRRGGFCNLILQKCECL.

An N-terminal signal peptide occupies residues 1-25; sequence MKNASLKLPLLIFILVITSNLGAEA. Cystine bridges form between Cys-60/Cys-76, Cys-66/Cys-83, and Cys-70/Cys-85.

This sequence belongs to the DEFL family.

Its subcellular location is the secreted. This chain is Defensin-like protein 259, found in Arabidopsis thaliana (Mouse-ear cress).